Consider the following 247-residue polypeptide: MNERITILSAYSFVNIIEPANLIPKLLLVGKKKYIRGTILLANEGFNSSFSGSYENVNIVLKQLIALTGSKDVNVKINYSPVHPFQKLKVRLKREIIAMNVKDLNVDVFKGHYIEPKDWDEFITKQNVILIDTRNEYEIDIGTFKSAINPRTETFKQFPAWVQQNHALLQGKKIAMFCTGGIRCEKSTSLLKSIGYNEVYHLKGGILQYLEDTHNKNNLWQGKCFVFDDRRAVADDLYPAEGYWLHR.

One can recognise a Rhodanese domain in the interval 124-218 (TKQNVILIDT…YLEDTHNKNN (95 aa)). C178 functions as the Cysteine persulfide intermediate in the catalytic mechanism.

Belongs to the TrhO family.

It catalyses the reaction uridine(34) in tRNA + AH2 + O2 = 5-hydroxyuridine(34) in tRNA + A + H2O. Catalyzes oxygen-dependent 5-hydroxyuridine (ho5U) modification at position 34 in tRNAs. The polypeptide is tRNA uridine(34) hydroxylase (Rickettsia prowazekii (strain Madrid E)).